The chain runs to 470 residues: Origin of replication complex subunit 4 (470 aa).

Residue 63-70 (GPRGCGKA) participates in ATP binding.

The protein belongs to the ORC4 family. Component of the origin recognition complex (ORC) composed of at least ORC1, ORC2, ORC3, ORC4, ORC5 and ORC6. ORC is regulated in a cell-cycle and development dependent manner. It is sequentially assembled at the exit from anaphase of mitosis and disassembled as cells enter S phase. Expressed in the shoot apical meristem (SAM), leaves, ears and roots (including root tips).

It is found in the nucleus. Component of the origin recognition complex (ORC) that binds origins of replication. DNA-binding is ATP-dependent. The specific DNA sequences that define origins of replication have not been identified yet. ORC is required to assemble the pre-replication complex necessary to initiate DNA replication. This is Origin of replication complex subunit 4 from Oryza sativa subsp. japonica (Rice).